Reading from the N-terminus, the 66-residue chain is Large ribosomal subunit protein bL31 (66 aa).

Zn(2+)-binding residues include C16, C18, C36, and C39.

Belongs to the bacterial ribosomal protein bL31 family. Type A subfamily. As to quaternary structure, part of the 50S ribosomal subunit. The cofactor is Zn(2+).

Functionally, binds the 23S rRNA. This is Large ribosomal subunit protein bL31 from Natranaerobius thermophilus (strain ATCC BAA-1301 / DSM 18059 / JW/NM-WN-LF).